We begin with the raw amino-acid sequence, 156 residues long: ATP synthase subunit b (156 aa).

A helical transmembrane segment spans residues 7–27 (LIAQFVVFFILAGFTMKFVWP).

The protein belongs to the ATPase B chain family. In terms of assembly, F-type ATPases have 2 components, F(1) - the catalytic core - and F(0) - the membrane proton channel. F(1) has five subunits: alpha(3), beta(3), gamma(1), delta(1), epsilon(1). F(0) has three main subunits: a(1), b(2) and c(10-14). The alpha and beta chains form an alternating ring which encloses part of the gamma chain. F(1) is attached to F(0) by a central stalk formed by the gamma and epsilon chains, while a peripheral stalk is formed by the delta and b chains.

The protein resides in the cell inner membrane. F(1)F(0) ATP synthase produces ATP from ADP in the presence of a proton or sodium gradient. F-type ATPases consist of two structural domains, F(1) containing the extramembraneous catalytic core and F(0) containing the membrane proton channel, linked together by a central stalk and a peripheral stalk. During catalysis, ATP synthesis in the catalytic domain of F(1) is coupled via a rotary mechanism of the central stalk subunits to proton translocation. In terms of biological role, component of the F(0) channel, it forms part of the peripheral stalk, linking F(1) to F(0). The sequence is that of ATP synthase subunit b from Herminiimonas arsenicoxydans.